A 786-amino-acid chain; its full sequence is Endonuclease MutS2 (786 aa).

Residue 335–342 (GPNTGGKT) participates in ATP binding. One can recognise a Smr domain in the interval 711 to 786 (LDLRGERFEN…GLGVTVVELK (76 aa)).

It belongs to the DNA mismatch repair MutS family. MutS2 subfamily. As to quaternary structure, homodimer. Binds to stalled ribosomes, contacting rRNA.

In terms of biological role, endonuclease that is involved in the suppression of homologous recombination and thus may have a key role in the control of bacterial genetic diversity. Its function is as follows. Acts as a ribosome collision sensor, splitting the ribosome into its 2 subunits. Detects stalled/collided 70S ribosomes which it binds and splits by an ATP-hydrolysis driven conformational change. Acts upstream of the ribosome quality control system (RQC), a ribosome-associated complex that mediates the extraction of incompletely synthesized nascent chains from stalled ribosomes and their subsequent degradation. Probably generates substrates for RQC. The chain is Endonuclease MutS2 from Bacillus anthracis (strain A0248).